Here is a 299-residue protein sequence, read N- to C-terminus: HTH-type transcriptional regulator CrgA (299 aa).

An HTH lysR-type domain is found at Met1–Thr60. The segment at residues Phe20 to Lys39 is a DNA-binding region (H-T-H motif).

The protein belongs to the LysR transcriptional regulatory family. Forms oligomers. Oligomerization is required for DNA binding.

Involved in the regulation of bacterial adhesion to host epithelial cells. May play a central regulatory role in meningococcal adhesion, particularly in switching from initial adhesion to intimate adhesion by downregulating the bacterial surface structures that hinder this adhesion. During intimate adhesion, negatively regulates the expression of pilC1, encoding a pilus-associated protein, pilE, encoding the pilin, and sia genes, encoding the capsule. Also negatively regulates its own expression. May also regulate other genes that are involved in intimate adhesion. Binds specifically to the promoter region of pilC1 and crgA (both harboring a CREN element), and pilE and sia (both devoid of a CREN element). Acts through interaction with RNA polymerase (RNAP). Interaction with RNAP leads to the production of short abortive transcripts, suggesting that CrgA may act by preventing RNAP from clearing the promoter. This Neisseria meningitidis serogroup C (strain 8013) protein is HTH-type transcriptional regulator CrgA.